We begin with the raw amino-acid sequence, 330 residues long: G-protein coupled bile acid receptor 1 (330 aa).

Over 1-19 (MTPNSTGEVPGPIPRGALE) the chain is Extracellular. Asparagine 4 is a glycosylation site (N-linked (GlcNAc...) asparagine). A helical transmembrane segment spans residues 20 to 40 (LSLALASLIIAANLLLALGIA). The Cytoplasmic segment spans residues 41-50 (CDRRLRSPPA). Residues 51–71 (GCFFLSLLLAGLLTGLALPTL) form a helical membrane-spanning segment. At 72–85 (PGLWRQSHRGYWSC) the chain is on the extracellular side. Cysteines 85 and 155 form a disulfide. A helical membrane pass occupies residues 86–106 (LLVYLAPNFSFLSLLANLLLV). The Cytoplasmic portion of the chain corresponds to 107–125 (HGERYVAVLRPLQPPGSIR). A helical membrane pass occupies residues 126–146 (LALLLTWTGPLLFASLPALGW). Topologically, residues 147-169 (NHWGPEANCSSQTIFPAPYLYLE) are extracellular. An N-linked (GlcNAc...) asparagine glycan is attached at asparagine 154. A helical membrane pass occupies residues 170–190 (VYGLLLPAVGAAALLSAHVLL). Residues 191-230 (AAHRQLQDIRRLERAVCRDAPSALARALTWRQARAQAGAT) lie on the Cytoplasmic side of the membrane. The helical transmembrane segment at 231 to 251 (LLFGLCWGPYVATLFLSVLAY) threads the bilayer. The Extracellular portion of the chain corresponds to 252–261 (EQRPPLGPGT). Residues 262–282 (LLSLLSLGSASAAAVPVAMGL) form a helical membrane-spanning segment. Over 283–330 (GDHRYTAPWRAAARRWLRGLRGRGSQASPGPSTAYHTSSQSSVDVDLN) the chain is Cytoplasmic. A disordered region spans residues 304-330 (GRGSQASPGPSTAYHTSSQSSVDVDLN). Over residues 307–330 (SQASPGPSTAYHTSSQSSVDVDLN) the composition is skewed to polar residues.

It belongs to the G-protein coupled receptor 1 family. As to expression, expressed at high level in spleen. Expressed at lower level in thymus, heart, lung, liver, kidney, ileum, blood and adherent alveolar macrophage cells.

It localises to the cell membrane. Functionally, receptor for bile acid. Bile-acid binding induces its internalization, activation of extracellular signal-regulated kinase and intracellular cAMP production. May be involved in the suppression of macrophage functions by bile acids. Involved in bile acid promoted GLP1R secretion. The protein is G-protein coupled bile acid receptor 1 (GPBAR1) of Oryctolagus cuniculus (Rabbit).